Consider the following 94-residue polypeptide: Antifungal protein (94 aa).

Positions 1 to 21 (MKFVSLASLGFALVAALGAVA) are cleaved as a signal peptide. A propeptide spanning residues 22-43 (TPVEADSLTAGGLDARDESAVL) is cleaved from the precursor. Disulfide bonds link Cys50/Cys76, Cys57/Cys83, Cys69/Cys71, and Cys92/Cys94.

Belongs to the antifungal protein pafB family.

It is found in the secreted. It localises to the host cytoplasm. Antifungal protein that acts as an inhibitor of growth of a variety of fungal species. The polypeptide is Antifungal protein (afp) (Aspergillus giganteus).